The sequence spans 262 residues: Expansin-A13 (262 aa).

A signal peptide spans 1–22 (MAGVARMLAAVVCAIMPAAAMA). Positions 52–167 (GGACGYGNLY…QRVPCMKKGG (116 aa)) constitute an Expansin-like EG45 domain. Residues 177–257 (YFQLVLLTNV…GWRFGQTFAS (81 aa)) enclose the Expansin-like CBD domain.

The protein belongs to the expansin family. Expansin A subfamily. As to expression, expressed in roots and flowers.

It localises to the secreted. The protein localises to the cell wall. It is found in the membrane. Its function is as follows. May cause loosening and extension of plant cell walls by disrupting non-covalent bonding between cellulose microfibrils and matrix glucans. No enzymatic activity has been found. May be required for rapid internodal elongation in deepwater rice during submergence. The chain is Expansin-A13 (EXPA13) from Oryza sativa subsp. japonica (Rice).